The sequence spans 517 residues: Protein BTN1 (517 aa).

8 helical membrane-spanning segments follow: residues 24–44 (LFAA…IILS), 57–77 (GVVA…WPLL), 88–108 (VGFC…SSSL), 112–132 (LLGI…FLQL), 146–166 (LGAW…IWWL), 169–189 (GLGV…FPIT), 371–391 (PAII…TFFF), and 409–429 (SITI…SGYV).

It belongs to the battenin family.

Its subcellular location is the vacuole membrane. Its function is as follows. Involved in vacuolar transport and vacuole pH homeostasis. Also required for cytokinesis. This chain is Protein BTN1 (BTN1), found in Cryptococcus neoformans var. neoformans serotype D (strain B-3501A) (Filobasidiella neoformans).